The sequence spans 170 residues: MMIRPIVKYPDPVLQQPAEPVTEFNEELRALVDDMFESMYEAKGIGLAAPQIGISKRLTVIDLSFKENPDEKIVLINPEIIHREGRQYEEEGCLSLPDIREKVVRAEKVTVRAQNLDGEWFEMDGEELLSRAFQHEIDHLDGVLFIFRISALKRDLVLRRIRKMQRAGEW.

Fe cation-binding residues include Cys93 and His135. Glu136 is an active-site residue. His139 is a binding site for Fe cation.

Belongs to the polypeptide deformylase family. Fe(2+) is required as a cofactor.

The catalysed reaction is N-terminal N-formyl-L-methionyl-[peptide] + H2O = N-terminal L-methionyl-[peptide] + formate. Removes the formyl group from the N-terminal Met of newly synthesized proteins. Requires at least a dipeptide for an efficient rate of reaction. N-terminal L-methionine is a prerequisite for activity but the enzyme has broad specificity at other positions. The protein is Peptide deformylase of Acidobacterium capsulatum (strain ATCC 51196 / DSM 11244 / BCRC 80197 / JCM 7670 / NBRC 15755 / NCIMB 13165 / 161).